Consider the following 276-residue polypeptide: 2,3,4,5-tetrahydropyridine-2,6-dicarboxylate N-succinyltransferase (276 aa).

Substrate-binding residues include R100 and D137.

The protein belongs to the transferase hexapeptide repeat family. Homotrimer.

Its subcellular location is the cytoplasm. It carries out the reaction (S)-2,3,4,5-tetrahydrodipicolinate + succinyl-CoA + H2O = (S)-2-succinylamino-6-oxoheptanedioate + CoA. The protein operates within amino-acid biosynthesis; L-lysine biosynthesis via DAP pathway; LL-2,6-diaminopimelate from (S)-tetrahydrodipicolinate (succinylase route): step 1/3. The sequence is that of 2,3,4,5-tetrahydropyridine-2,6-dicarboxylate N-succinyltransferase from Zymomonas mobilis subsp. mobilis (strain ATCC 31821 / ZM4 / CP4).